A 456-amino-acid polypeptide reads, in one-letter code: Chromosomal replication initiator protein DnaA (456 aa).

Residues 1 to 73 (MEIYLDNLWD…ADVVHDILGY (73 aa)) are domain I, interacts with DnaA modulators. Positions 73 to 117 (YPVEIYLTTFLVEDSRKNDSGLIWSEHKSVNILGENLSIPKPLPA) are domain II. Residues 118-334 (NLNAKYMFSR…GALTRVVTYI (217 aa)) form a domain III, AAA+ region region. ATP is bound by residues glycine 162, glycine 164, lysine 165, and threonine 166. A domain IV, binds dsDNA region spans residues 335–456 (SISGLPMTVE…SDRINFSSRH (122 aa)).

It belongs to the DnaA family. As to quaternary structure, oligomerizes as a right-handed, spiral filament on DNA at oriC.

The protein resides in the cytoplasm. Plays an essential role in the initiation and regulation of chromosomal replication. ATP-DnaA binds to the origin of replication (oriC) to initiate formation of the DNA replication initiation complex once per cell cycle. Binds the DnaA box (a 9 base pair repeat at the origin) and separates the double-stranded (ds)DNA. Forms a right-handed helical filament on oriC DNA; dsDNA binds to the exterior of the filament while single-stranded (ss)DNA is stabiized in the filament's interior. The ATP-DnaA-oriC complex binds and stabilizes one strand of the AT-rich DNA unwinding element (DUE), permitting loading of DNA polymerase. After initiation quickly degrades to an ADP-DnaA complex that is not apt for DNA replication. Binds acidic phospholipids. This Trichodesmium erythraeum (strain IMS101) protein is Chromosomal replication initiator protein DnaA.